A 355-amino-acid polypeptide reads, in one-letter code: 3-dehydroquinate synthase (355 aa).

NAD(+) is bound by residues 105-109 (GVVGD), 129-130 (TS), Lys-142, Lys-151, and 169-172 (TLKT). Residues Glu-184, His-246, and His-263 each contribute to the Zn(2+) site.

The protein belongs to the sugar phosphate cyclases superfamily. Dehydroquinate synthase family. Co(2+) is required as a cofactor. It depends on Zn(2+) as a cofactor. The cofactor is NAD(+).

It localises to the cytoplasm. It carries out the reaction 7-phospho-2-dehydro-3-deoxy-D-arabino-heptonate = 3-dehydroquinate + phosphate. It functions in the pathway metabolic intermediate biosynthesis; chorismate biosynthesis; chorismate from D-erythrose 4-phosphate and phosphoenolpyruvate: step 2/7. In terms of biological role, catalyzes the conversion of 3-deoxy-D-arabino-heptulosonate 7-phosphate (DAHP) to dehydroquinate (DHQ). In Streptococcus agalactiae serotype Ia (strain ATCC 27591 / A909 / CDC SS700), this protein is 3-dehydroquinate synthase.